Reading from the N-terminus, the 307-residue chain is MSLINEHCNERNYISTPNSSEDLSSPQNCGLDEGASASSSSTINSDHQNNQGFVFYPSGETIEDHNSLMDFNASSFFTFDNHRSLISPVTNGGAFPVVDGNMSYSYDGWSHHQVDSISPRVIKTPNSFETTSSFGLTSNSMSKPATNHGNGDWLYSGSTIVNIGSRHESTSPKLAGNKRPFTGENTQLSKKPSSGTNGKIKPKATTSPKDPQSLAAKNRRERISERLKVLQELVPNGTKVDLVTMLEKAIGYVKFLQVQVKVLAADEFWPAQGGKAPDISQVKEAIDAILSSSQRDSNSTRETSIAE.

2 disordered regions span residues 1–49 and 167–215; these read MSLI…DHQN and HEST…QSLA. Polar residues-rich tracts occupy residues 12 to 28 and 183 to 197; these read NYIS…SPQN and GENT…SGTN. The basic motif stretch occupies residues 207-220; the sequence is SPKDPQSLAAKNRR. A bHLH domain is found at 207 to 256; sequence SPKDPQSLAAKNRRERISERLKVLQELVPNGTKVDLVTMLEKAIGYVKFL. The helix-loop-helix motif stretch occupies residues 221–256; that stretch reads ERISERLKVLQELVPNGTKVDLVTMLEKAIGYVKFL.

As to quaternary structure, homodimer. Forms heterodimers with RHD6. Interacts with TIFY10B/JAZ2, TIFY6A/JAZ4, TIFY5A/JAZ8, TIFY7/JAZ9 and TIFY9/JAZ10.

The protein localises to the nucleus. Transcription factor that is specifically required for the development of root hairs. Acts with RHD6 to positively regulate root hair development. Acts downstream of genes that regulate epidermal pattern formation, such as GL2. Acts with RHD6 as transcription factor that integrates a jasmonate (JA) signaling pathway that stimulates root hair growth. The sequence is that of Putative transcription factor bHLH086 from Arabidopsis thaliana (Mouse-ear cress).